The following is an 83-amino-acid chain: Putative protein T-ENOL (83 aa).

Residues 1 to 33 (MASTPMGNEGEKKSSWPSQAAPSLRGGPASLSR) form a disordered region.

This is Putative protein T-ENOL from Homo sapiens (Human).